A 265-amino-acid chain; its full sequence is MRLGLCVVALVLSWTHIAVGSRGIKGKRQRRISAEGSQACAKGCELCSEVNGCLKCSPKLFILLERNDIRQVGVCLPSCPPGYFDARNPDMNKCIKCKIEHCEACFSHNFCTKCQEALYLHKGRCYPACPEGSTAANSTMECGSPAQCEMSEWSPWGPCSKKRKLCGFRKGSEERTRRVLHAPGGDHTTCSDTKETRKCTVRRTPCPEGQKRRKGGQGRRENANRHPARKNSKEPRSNSRRHKGQQQPQPGTTGPLTSVGPTWAQ.

The first 20 residues, 1–20, serve as a signal peptide directing secretion; sequence MRLGLCVVALVLSWTHIAVG. FU repeat units follow at residues 34 to 85 and 91 to 135; these read AEGS…GYFD and MNKC…GSTA. Disulfide bonds link cysteine 40-cysteine 47, cysteine 44-cysteine 53, cysteine 56-cysteine 75, cysteine 79-cysteine 94, cysteine 97-cysteine 105, cysteine 102-cysteine 111, cysteine 114-cysteine 125, cysteine 129-cysteine 142, cysteine 148-cysteine 190, cysteine 159-cysteine 166, and cysteine 199-cysteine 206. The N-linked (GlcNAc...) asparagine glycan is linked to asparagine 137. Residues 147-207 enclose the TSP type-1 domain; it reads QCEMSEWSPW…KCTVRRTPCP (61 aa). The C-linked (Man) tryptophan glycan is linked to tryptophan 153. Tryptophan 156 carries C-linked (Man) tryptophan; by DPY19L3 glycosylation. Disordered stretches follow at residues 173–192 and 201–265; these read EERT…TCSD and VRRT…TWAQ. A compositionally biased stretch (low complexity) spans 245–257; it reads QQQPQPGTTGPLT.

This sequence belongs to the R-spondin family. In terms of assembly, interacts with ZNRF3; promoting indirect interaction between ZNRF3 and LGR4 and membrane clearance of ZNRF3. Identified in a complex composed of RNF43, LGR5 and RSPO1. Interacts with the extracellular domain of FZD8 and LRP6. It however does not form a ternary complex with FZD8 and LRP6. Interacts with WNT1. Binds heparin. Interacts with LGR4, LGR5 and LGR6. Interacts (via FU repeats) with KREM1. Post-translationally, C-, and N-glycosylated. N-glycosylation at Asn-137, negatively influences its secretion and enhancing effect on Wnt/beta-catenin signaling. C-mannosylation at Trp-156 by DPY19L3 is required for its secretion an regulates the enhancing activity of Wnt signaling. As to expression, expressed in the dorsal part of the neural tube on 10 and 12 dpc, especially in the boundary region between roof plate and neuroepithelium. This expression is enhanced in the rostral part. Also expressed in other tissues such as truncal region neighboring forelimbs and mesenchymal tissues around the nasal cavity.

The protein resides in the secreted. Its subcellular location is the nucleus. Its function is as follows. Activator of the canonical Wnt signaling pathway by acting as a ligand for LGR4-6 receptors. Upon binding to LGR4-6 (LGR4, LGR5 or LGR6), LGR4-6 associate with phosphorylated LRP6 and frizzled receptors that are activated by extracellular Wnt receptors, triggering the canonical Wnt signaling pathway to increase expression of target genes. Also regulates the canonical Wnt/beta-catenin-dependent pathway and non-canonical Wnt signaling by acting as an inhibitor of ZNRF3, an important regulator of the Wnt signaling pathway. Acts as a ligand for frizzled FZD8 and LRP6. May negatively regulate the TGF-beta pathway. Has a essential roles in ovary determination. Regulates Wnt signaling by antagonizing DKK1/KREM1-mediated internalization of LRP6 through an interaction with KREM1. In Mus musculus (Mouse), this protein is R-spondin-1 (Rspo1).